The following is a 504-amino-acid chain: Maturase K (504 aa).

It belongs to the intron maturase 2 family. MatK subfamily.

It is found in the plastid. The protein localises to the chloroplast. Its function is as follows. Usually encoded in the trnK tRNA gene intron. Probably assists in splicing its own and other chloroplast group II introns. This is Maturase K from Guizotia abyssinica (Niger).